Consider the following 367-residue polypeptide: Dual specificity protein phosphatase 1 (367 aa).

In terms of domain architecture, Rhodanese spans 20 to 137; the sequence is RAAQCLLLDC…FSASCPELCS (118 aa). Residues 173–314 form the Tyrosine-protein phosphatase domain; it reads GPVEILSFLY…LLQFESQVLA (142 aa). Cys258 acts as the Phosphocysteine intermediate in catalysis. Residues Ser359 and Ser364 each carry the phosphoserine; by MAPK1 and MAPK3 modification.

This sequence belongs to the protein-tyrosine phosphatase family. Non-receptor class dual specificity subfamily. Post-translationally, phosphorylation at Ser-359 and Ser-364 by MAPK1/ERK2 and MAPK3/ERK1 reduces its rate of degradation. 'Lys-48'-linked polyubiquitinated by NEURL3, leading to proteasomal degradation. In terms of tissue distribution, brain. High level expression seen in the cingulate gyrus within the retrospinal cortex, ventral and medial divisions of the anterior thalamus and the medial geniculate nucleus. Expressed at moderate levels in the parietal and temporal cortex. Expressed in the cerebellum.

Its subcellular location is the nucleus. The catalysed reaction is O-phospho-L-tyrosyl-[protein] + H2O = L-tyrosyl-[protein] + phosphate. It catalyses the reaction O-phospho-L-seryl-[protein] + H2O = L-seryl-[protein] + phosphate. The enzyme catalyses O-phospho-L-threonyl-[protein] + H2O = L-threonyl-[protein] + phosphate. Dual specificity phosphatase that dephosphorylates MAP kinase MAPK1/ERK2 on both 'Thr-183' and 'Tyr-185', regulating its activity during the meiotic cell cycle. The protein is Dual specificity protein phosphatase 1 of Rattus norvegicus (Rat).